The sequence spans 340 residues: UDP-glucose 4-epimerase (340 aa).

Residues 16-17 (YI), 37-42 (IDNNKN), 60-61 (DL), 82-86 (FAAKT), serine 127, tyrosine 154, lysine 158, and phenylalanine 182 each bind NAD(+). 2 residues coordinate substrate: serine 127 and tyrosine 154. Residue tyrosine 154 is the Proton acceptor of the active site. Residues asparagine 183, 199-200 (TL), 216-218 (FLY), arginine 231, and 295-298 (RSWD) each bind substrate.

Belongs to the NAD(P)-dependent epimerase/dehydratase family. In terms of assembly, homodimer. NAD(+) serves as cofactor.

The enzyme catalyses UDP-alpha-D-glucose = UDP-alpha-D-galactose. It functions in the pathway carbohydrate metabolism; galactose metabolism. In terms of biological role, involved in the metabolism of galactose. Catalyzes the conversion of UDP-galactose (UDP-Gal) to UDP-glucose (UDP-Glc) through a mechanism involving the transient reduction of NAD. This Mycoplasma genitalium (strain ATCC 33530 / DSM 19775 / NCTC 10195 / G37) (Mycoplasmoides genitalium) protein is UDP-glucose 4-epimerase (galE).